The chain runs to 466 residues: Asparagine--tRNA ligase (466 aa).

This sequence belongs to the class-II aminoacyl-tRNA synthetase family. In terms of assembly, homodimer.

The protein localises to the cytoplasm. The enzyme catalyses tRNA(Asn) + L-asparagine + ATP = L-asparaginyl-tRNA(Asn) + AMP + diphosphate + H(+). The polypeptide is Asparagine--tRNA ligase (Shewanella amazonensis (strain ATCC BAA-1098 / SB2B)).